A 427-amino-acid polypeptide reads, in one-letter code: MKAKVEKIETNVIKLEIRVEAEKFDAALTKAYNKNKGRYNIPGFRKGKVPMAMVKKFYGVEVFYDDAVNFAIDESYPEALNAENIKPVDYPQVDIVELGEGKELVYTATVTTYPEVELGEYKGLDIKKPIYEVEDTEIDKQIKEMQEKNARIEVKTEGNIAKGDIAVIDFKGYIDGVAFEGGEGSDYSLEIGSGTFIDNFEEQLIGLAVGDKKEVNVTFPEAYGKEELNGKPAMFEVEIKSIKVKELPELDDEFAKDVSAVDTFAELKENLKKTLEKNNDEKAEREFEEAVITAVIENSKMDIPEVMVNKEIDAMMQDLEGRLKYQGLSLEQYMEFTGNTTEKMRDFMKENAERKVKADLVLEAIAKTEEIKATEEELNARALELGKIYGPKDPEKMAKILVKSQRNMIEKDIILENTLKFLKENCK.

Residues 163–248 enclose the PPIase FKBP-type domain; sequence GDIAVIDFKG…IKSIKVKELP (86 aa).

This sequence belongs to the FKBP-type PPIase family. Tig subfamily.

The protein resides in the cytoplasm. The enzyme catalyses [protein]-peptidylproline (omega=180) = [protein]-peptidylproline (omega=0). Involved in protein export. Acts as a chaperone by maintaining the newly synthesized protein in an open conformation. Functions as a peptidyl-prolyl cis-trans isomerase. The protein is Trigger factor of Clostridium beijerinckii (strain ATCC 51743 / NCIMB 8052) (Clostridium acetobutylicum).